A 406-amino-acid chain; its full sequence is Purine nucleoside permease (406 aa).

Residues 1–22 (MKLSTLFTLATTISTLTTFTIA) form the signal peptide.

The protein belongs to the NUP family.

With respect to regulation, mammalian nucleoside transport inhibitors dipyridamole and NBMPR inhibit adenosine transport by NUP. In terms of biological role, nucleoside permease that transports adenosine and guanosine. Does not show any transport activities towards cytidine, adenine, guanine, uridine, and uracil. In Candida albicans (Yeast), this protein is Purine nucleoside permease.